Consider the following 427-residue polypeptide: 3-phosphoshikimate 1-carboxyvinyltransferase (427 aa).

The 3-phosphoshikimate site is built by Lys22, Ser23, and Arg27. Lys22 contributes to the phosphoenolpyruvate binding site. Phosphoenolpyruvate contacts are provided by Gly96 and Arg124. Residues Ser169, Ser170, Gln171, Ser197, Asp313, Asn336, and Lys340 each coordinate 3-phosphoshikimate. Gln171 lines the phosphoenolpyruvate pocket. Asp313 (proton acceptor) is an active-site residue. Phosphoenolpyruvate contacts are provided by Arg344, Arg386, and Lys411.

This sequence belongs to the EPSP synthase family. Monomer.

It localises to the cytoplasm. It carries out the reaction 3-phosphoshikimate + phosphoenolpyruvate = 5-O-(1-carboxyvinyl)-3-phosphoshikimate + phosphate. The protein operates within metabolic intermediate biosynthesis; chorismate biosynthesis; chorismate from D-erythrose 4-phosphate and phosphoenolpyruvate: step 6/7. Catalyzes the transfer of the enolpyruvyl moiety of phosphoenolpyruvate (PEP) to the 5-hydroxyl of shikimate-3-phosphate (S3P) to produce enolpyruvyl shikimate-3-phosphate and inorganic phosphate. The sequence is that of 3-phosphoshikimate 1-carboxyvinyltransferase from Escherichia coli (strain SMS-3-5 / SECEC).